The sequence spans 141 residues: Nucleoside diphosphate kinase (141 aa).

The ATP site is built by K11, F59, R87, T93, R104, and N114. H117 (pros-phosphohistidine intermediate) is an active-site residue.

The protein belongs to the NDK family. In terms of assembly, homotetramer. Requires Mg(2+) as cofactor.

It localises to the cytoplasm. It carries out the reaction a 2'-deoxyribonucleoside 5'-diphosphate + ATP = a 2'-deoxyribonucleoside 5'-triphosphate + ADP. The catalysed reaction is a ribonucleoside 5'-diphosphate + ATP = a ribonucleoside 5'-triphosphate + ADP. In terms of biological role, major role in the synthesis of nucleoside triphosphates other than ATP. The ATP gamma phosphate is transferred to the NDP beta phosphate via a ping-pong mechanism, using a phosphorylated active-site intermediate. This chain is Nucleoside diphosphate kinase, found in Bordetella bronchiseptica (strain ATCC BAA-588 / NCTC 13252 / RB50) (Alcaligenes bronchisepticus).